The chain runs to 295 residues: NAD kinase (295 aa).

D74 (proton acceptor) is an active-site residue. Residues 74–75, 148–149, H159, R176, D178, and 189–194 each bind NAD(+); these read DG, ND, and TAYALS.

The protein belongs to the NAD kinase family. A divalent metal cation is required as a cofactor.

The protein localises to the cytoplasm. It carries out the reaction NAD(+) + ATP = ADP + NADP(+) + H(+). Functionally, involved in the regulation of the intracellular balance of NAD and NADP, and is a key enzyme in the biosynthesis of NADP. Catalyzes specifically the phosphorylation on 2'-hydroxyl of the adenosine moiety of NAD to yield NADP. This Legionella pneumophila (strain Paris) protein is NAD kinase.